Here is a 111-residue protein sequence, read N- to C-terminus: Putative pterin-4-alpha-carbinolamine dehydratase (111 aa).

Belongs to the pterin-4-alpha-carbinolamine dehydratase family.

It carries out the reaction (4aS,6R)-4a-hydroxy-L-erythro-5,6,7,8-tetrahydrobiopterin = (6R)-L-erythro-6,7-dihydrobiopterin + H2O. This Alkaliphilus metalliredigens (strain QYMF) protein is Putative pterin-4-alpha-carbinolamine dehydratase.